Reading from the N-terminus, the 474-residue chain is tRNA-2-methylthio-N(6)-dimethylallyladenosine synthase (474 aa).

Positions 3-120 constitute an MTTase N-terminal domain; it reads KKLHIKTWGC…LPEMINHVNG (118 aa). [4Fe-4S] cluster is bound by residues Cys12, Cys49, Cys83, Cys157, Cys161, and Cys164. One can recognise a Radical SAM core domain in the interval 143 to 375; it reads RAEGPTAFVS…QERITQQAMQ (233 aa). The region spanning 378–441 is the TRAM domain; the sequence is RRMKGKVQRI…PNSLRGVLLR (64 aa).

The protein belongs to the methylthiotransferase family. MiaB subfamily. As to quaternary structure, monomer. Requires [4Fe-4S] cluster as cofactor.

Its subcellular location is the cytoplasm. The catalysed reaction is N(6)-dimethylallyladenosine(37) in tRNA + (sulfur carrier)-SH + AH2 + 2 S-adenosyl-L-methionine = 2-methylsulfanyl-N(6)-dimethylallyladenosine(37) in tRNA + (sulfur carrier)-H + 5'-deoxyadenosine + L-methionine + A + S-adenosyl-L-homocysteine + 2 H(+). In terms of biological role, catalyzes the methylthiolation of N6-(dimethylallyl)adenosine (i(6)A), leading to the formation of 2-methylthio-N6-(dimethylallyl)adenosine (ms(2)i(6)A) at position 37 in tRNAs that read codons beginning with uridine. The polypeptide is tRNA-2-methylthio-N(6)-dimethylallyladenosine synthase (Sodalis glossinidius (strain morsitans)).